The chain runs to 270 residues: Diaminopimelate epimerase (270 aa).

Residues Asn15, Gln49, and Asn66 each coordinate substrate. The Proton donor role is filled by Cys75. Substrate contacts are provided by residues 76–77, Asn155, Asn187, and 204–205; these read GN and ER. Residue Cys213 is the Proton acceptor of the active site. 214–215 serves as a coordination point for substrate; the sequence is GS.

This sequence belongs to the diaminopimelate epimerase family. As to quaternary structure, homodimer.

It is found in the cytoplasm. It carries out the reaction (2S,6S)-2,6-diaminopimelate = meso-2,6-diaminopimelate. The protein operates within amino-acid biosynthesis; L-lysine biosynthesis via DAP pathway; DL-2,6-diaminopimelate from LL-2,6-diaminopimelate: step 1/1. Catalyzes the stereoinversion of LL-2,6-diaminopimelate (L,L-DAP) to meso-diaminopimelate (meso-DAP), a precursor of L-lysine and an essential component of the bacterial peptidoglycan. This chain is Diaminopimelate epimerase, found in Rickettsia prowazekii (strain Madrid E).